Consider the following 414-residue polypeptide: MSYYDTIFNKHIDKIKSEGRYREFKSLKRQADNFPFAEYEDKQIVMWCINDYLGMSKHIKVMQASIDALLEYGVGSGGTRNIGGNNISILELEKELADLHSKETALVFTSGFVANDTTLASLAKIIPDIVFFSDELNHASIIAGITSSRAEKYVYRHLDVQHLEKLLQSVDINKPKIIVFESAYSMDGFFSPIKDIINLAKKYNALTFIDEVHTVGLYGKQGGGISELLDCSNQIDIIQGTLAKAYGTIGGYITSNYNLIDAIRLTAPGFIFTTSLPPVISTAATHSIRHLKVSNEERIKHQEVVTKLKNSFEHFNIPYLKNESHIIPIIIGDPIKATKVSNMLLNEYGIYVQHINFPTVPRGTERLRIIPTPAHTDKMINDLSTALVHIFAELDIELSSTKELNKEVRLHLIA.

Positions 22, 133, and 152 each coordinate substrate. Pyridoxal 5'-phosphate-binding residues include S185, H213, and T241. K244 is an active-site residue. Residue K244 is modified to N6-(pyridoxal phosphate)lysine. T273 and T274 together coordinate pyridoxal 5'-phosphate. T359 provides a ligand contact to substrate.

Belongs to the class-II pyridoxal-phosphate-dependent aminotransferase family. As to quaternary structure, homodimer. Requires pyridoxal 5'-phosphate as cofactor.

It carries out the reaction succinyl-CoA + glycine + H(+) = 5-aminolevulinate + CO2 + CoA. The protein operates within porphyrin-containing compound metabolism; protoporphyrin-IX biosynthesis; 5-aminolevulinate from glycine: step 1/1. The protein is 5-aminolevulinate synthase (hemA) of Rickettsia typhi (strain ATCC VR-144 / Wilmington).